Here is a 194-residue protein sequence, read N- to C-terminus: Adenylate kinase isoenzyme 1 (194 aa).

Position 2 is an N-acetylalanine (Ala2). ATP is bound at residue Gly18 to Thr23. The NMP stretch occupies residues Ser38–Val67. AMP-binding positions include Ser39, Arg44, Glu65–Val67, Gly94–Arg97, and Gln101. The interval Lys131–Asp141 is LID. Arg132 provides a ligand contact to ATP. AMP contacts are provided by Arg138 and Arg149. Leu177 is an ATP binding site.

This sequence belongs to the adenylate kinase family. AK1 subfamily. In terms of assembly, monomer. The cofactor is Mg(2+).

It localises to the cytoplasm. It catalyses the reaction a ribonucleoside 5'-phosphate + ATP = a ribonucleoside 5'-diphosphate + ADP. It carries out the reaction AMP + ATP = 2 ADP. The catalysed reaction is dAMP + ATP = dADP + ADP. The enzyme catalyses dATP + AMP = dADP + ADP. It catalyses the reaction dAMP + dATP = 2 dADP. It carries out the reaction a 2'-deoxyribonucleoside 5'-diphosphate + ATP = a 2'-deoxyribonucleoside 5'-triphosphate + ADP. The catalysed reaction is a ribonucleoside 5'-diphosphate + ATP = a ribonucleoside 5'-triphosphate + ADP. The enzyme catalyses CDP + GTP = CTP + GDP. It catalyses the reaction GDP + ATP = GTP + ADP. It carries out the reaction UDP + ATP = UTP + ADP. The catalysed reaction is GTP + UDP = UTP + GDP. The enzyme catalyses dTDP + GTP = dTTP + GDP. It catalyses the reaction dCDP + GTP = dCTP + GDP. It carries out the reaction dGDP + ATP = dGTP + ADP. The catalysed reaction is dADP + GTP = dATP + GDP. The enzyme catalyses thiamine diphosphate + ADP = thiamine triphosphate + AMP. In terms of biological role, catalyzes the reversible transfer of the terminal phosphate group between ATP and AMP. Also displays broad nucleoside diphosphate kinase activity. Plays an important role in cellular energy homeostasis and in adenine nucleotide metabolism. Also catalyzes at a very low rate the synthesis of thiamine triphosphate (ThTP) from thiamine diphosphate (ThDP) and ADP. This is Adenylate kinase isoenzyme 1 (ak1) from Cyprinus carpio (Common carp).